We begin with the raw amino-acid sequence, 422 residues long: MAMRTRLTWQQEKCLQNYFGGKRFCLLYKASVQKFSHQNLLCTCENQGPTMIVVYSEKCVIGMYLKEGFQGKDVSITIFALQETGFSLCAKGPDSPYLLFHKRKTNDFSILLDEKAVIVSSAICKMLQLTARNNVIPIQECEAFRCEELLDERKTRGIAVLHSNLLQALRDYKPYGDLVQQTRVLLLGPIGAGKSSFVNSVKSVFKGSITHQILVGCDEDGISDKYRTYSIKAKDDSDPLPFILCDSLGLGENAGLHTDDVWHILKGHTPDRYQFDSMKPITSNHPNYTHDPLLKDRIHCVVFVFDINSFEMHSSELVAKIKKIRRDLIKHGILHLALLTHVDSLDLITKEDMTDIYNYSPVKSKLEAFHGVFGFALSDILVVSNYVSEWQLDPVKDMLILSALKEILYTANEFLEDLPLNK.

In terms of domain architecture, TLDc spans 1–147 (MAMRTRLTWQ…IQECEAFRCE (147 aa)).

Belongs to the IFI44 family.

Its subcellular location is the cytoplasm. This protein aggregates to form microtubular structures. This chain is Interferon-induced protein 44 (Ifi44), found in Mus musculus (Mouse).